A 226-amino-acid polypeptide reads, in one-letter code: MRVQLILHLEIPKEVCRSLEVDNYINNSIEINLKCEKKPTLYIKTHSIGSLKSILDDFFRCQNAAMEVYNLIKTYTIRNVTKDDLDDFLELYFKAYRGFDKYYYKKKKWARWYFKWLMKRDEDGFFVCEVNGKPVGFVACDCNWISNIEKREVAEIHEIFVDPDFRGRGIGTALINKAIEYAKKRGRRIVELWVGVENKGAIEFYKRLGFEEKEVVKGWLRMVKRI.

The 152-residue stretch at 75–226 folds into the N-acetyltransferase domain; sequence YTIRNVTKDD…KGWLRMVKRI (152 aa).

Belongs to the acetyltransferase family.

This is an uncharacterized protein from Methanocaldococcus jannaschii (strain ATCC 43067 / DSM 2661 / JAL-1 / JCM 10045 / NBRC 100440) (Methanococcus jannaschii).